Consider the following 95-residue polypeptide: Large ribosomal subunit protein eL37y (95 aa).

Residues Cys-19, Cys-22, Cys-34, and Cys-37 each coordinate Zn(2+). Residues 19–37 (CVRCGRRSFHIQKSRCSAC) form a C4-type zinc finger.

The protein belongs to the eukaryotic ribosomal protein eL37 family. Requires Zn(2+) as cofactor.

Functionally, binds to the 23S rRNA. The polypeptide is Large ribosomal subunit protein eL37y (RPL37B) (Arabidopsis thaliana (Mouse-ear cress)).